Consider the following 189-residue polypeptide: uncharacterized protein (189 aa).

The HTH tetR-type domain occupies 2-62 (RPTNKRILDA…ALLSQHSSNR (61 aa)). The H-T-H motif DNA-binding region spans 25–44 (TTKEIAEKANVSEATIFRNF).

This is an uncharacterized protein from Bacillus subtilis (strain 168).